The sequence spans 165 residues: MRAVSCFLYYGVAWIALGSWGASSSAERVSEMDIYEFESWVSCLDPEQVTCESQEGTHASYNRKTGQCEEQKGTECGGGENHFETLLKCNESCNDAPKPPCSLEVDYGVGRANIPRWYYDTNNATCEMFTYGGITGNKNNFESEEECKETCKGFSLLKKVNVTIN.

A signal peptide spans 1-26 (MRAVSCFLYYGVAWIALGSWGASSSA). BPTI/Kunitz inhibitor domains lie at 43-93 (CLDP…NESC) and 101-151 (CSLE…KETC). 5 disulfide bridges follow: cysteine 43-cysteine 93, cysteine 51-cysteine 76, cysteine 68-cysteine 89, cysteine 101-cysteine 151, and cysteine 126-cysteine 147. N-linked (GlcNAc...) asparagine glycans are attached at residues asparagine 90 and asparagine 123. N-linked (GlcNAc...) asparagine glycosylation is present at asparagine 161.

As to quaternary structure, monomer. Interacts with host coagulation factor X/F10 (inactive and activated). Saliva (at protein level). Salivary gland.

It localises to the secreted. Functionally, anticoagulant protein that modulates blood feeding of ticks on vertebrate species. Inhibits activation of host blood coagulation factor X (F10). Inhibits activity of host coagulation factor VIIa-tissue factor (F7-F3) complex in a factor X/Xa-dependent manner. Prevents interaction between host coagulation factor X and activated factor VIIIa (F8). The sequence is that of Ixolaris from Ixodes scapularis (Black-legged tick).